The primary structure comprises 225 residues: Large ribosomal subunit protein uL4 (225 aa).

Positions 46 to 102 (KRQGTHATKGRGEVRGGGRKPFRQKGTGRARQGSIRAPHFTGGGTVHGPQPRDYSQR) are disordered. The span at 62–73 (GGRKPFRQKGTG) shows a compositional bias: basic residues.

It belongs to the universal ribosomal protein uL4 family. As to quaternary structure, part of the 50S ribosomal subunit.

Functionally, one of the primary rRNA binding proteins, this protein initially binds near the 5'-end of the 23S rRNA. It is important during the early stages of 50S assembly. It makes multiple contacts with different domains of the 23S rRNA in the assembled 50S subunit and ribosome. Its function is as follows. Forms part of the polypeptide exit tunnel. This chain is Large ribosomal subunit protein uL4, found in Corynebacterium urealyticum (strain ATCC 43042 / DSM 7109).